The chain runs to 179 residues: Large ribosomal subunit protein eL18 (179 aa).

Belongs to the eukaryotic ribosomal protein eL18 family. As to quaternary structure, component of the large ribosomal subunit.

The protein resides in the cytoplasm. Its subcellular location is the cytosol. It is found in the rough endoplasmic reticulum. Functionally, component of the large ribosomal subunit. The ribosome is a large ribonucleoprotein complex responsible for the synthesis of proteins in the cell. This chain is Large ribosomal subunit protein eL18 (rpl18), found in Salmo salar (Atlantic salmon).